The chain runs to 429 residues: Glutamate-1-semialdehyde 2,1-aminomutase 1 (429 aa).

At K268 the chain carries N6-(pyridoxal phosphate)lysine.

The protein belongs to the class-III pyridoxal-phosphate-dependent aminotransferase family. HemL subfamily. Homodimer. The cofactor is pyridoxal 5'-phosphate.

It is found in the cytoplasm. It catalyses the reaction (S)-4-amino-5-oxopentanoate = 5-aminolevulinate. The protein operates within porphyrin-containing compound metabolism; protoporphyrin-IX biosynthesis; 5-aminolevulinate from L-glutamyl-tRNA(Glu): step 2/2. In Staphylococcus saprophyticus subsp. saprophyticus (strain ATCC 15305 / DSM 20229 / NCIMB 8711 / NCTC 7292 / S-41), this protein is Glutamate-1-semialdehyde 2,1-aminomutase 1.